The primary structure comprises 429 residues: Phosphoribosylamine--glycine ligase (429 aa).

In terms of domain architecture, ATP-grasp spans 109–316 (KDFLARHQIP…LVELCLAAID (208 aa)). 135-196 (VREQGAPIVV…EEFLDGEEAS (62 aa)) contacts ATP. Residues 212-234 (SQDHKRVGDKDTGPNTGGMGAYS) form a disordered region. Basic and acidic residues predominate over residues 213 to 223 (QDHKRVGDKDT). The Mg(2+) site is built by Glu286 and Asn288.

It belongs to the GARS family. Mg(2+) serves as cofactor. The cofactor is Mn(2+).

The catalysed reaction is 5-phospho-beta-D-ribosylamine + glycine + ATP = N(1)-(5-phospho-beta-D-ribosyl)glycinamide + ADP + phosphate + H(+). It participates in purine metabolism; IMP biosynthesis via de novo pathway; N(1)-(5-phospho-D-ribosyl)glycinamide from 5-phospho-alpha-D-ribose 1-diphosphate: step 2/2. The sequence is that of Phosphoribosylamine--glycine ligase from Vibrio vulnificus (strain YJ016).